A 122-amino-acid chain; its full sequence is MFAIYKSTLLLLPLILILLITPQVSSFLQPIQPPISPQVALIEDKARLGSTPPSCHNRCNNCHPCMAIQVPTLPTRSRFTRVNPFSGGFVRPPSSLTTVLDQYSNYKPMGWKCHCNGHFYNP.

The N-terminal stretch at 1-26 (MFAIYKSTLLLLPLILILLITPQVSS) is a signal peptide. Cystine bridges form between C55/C113, C59/C65, and C62/C115.

Belongs to the plant cysteine rich small secretory peptide family. Epidermal patterning factor subfamily.

The protein resides in the secreted. Functionally, controls stomatal patterning. The protein is EPIDERMAL PATTERNING FACTOR-like protein 1 of Arabidopsis thaliana (Mouse-ear cress).